We begin with the raw amino-acid sequence, 387 residues long: Succinate--CoA ligase [ADP-forming] subunit beta (387 aa).

The 236-residue stretch at 9-244 (KQLFAEYGIP…KTQEDETEVL (236 aa)) folds into the ATP-grasp domain. ATP is bound by residues Lys46, 53-55 (GRG), Gly102, and Glu107. Mg(2+)-binding residues include Asn199 and Asp213. Residues Asn264 and 321 to 323 (GIV) contribute to the substrate site.

The protein belongs to the succinate/malate CoA ligase beta subunit family. In terms of assembly, heterotetramer of two alpha and two beta subunits. It depends on Mg(2+) as a cofactor.

It carries out the reaction succinate + ATP + CoA = succinyl-CoA + ADP + phosphate. The enzyme catalyses GTP + succinate + CoA = succinyl-CoA + GDP + phosphate. It participates in carbohydrate metabolism; tricarboxylic acid cycle; succinate from succinyl-CoA (ligase route): step 1/1. Functionally, succinyl-CoA synthetase functions in the citric acid cycle (TCA), coupling the hydrolysis of succinyl-CoA to the synthesis of either ATP or GTP and thus represents the only step of substrate-level phosphorylation in the TCA. The beta subunit provides nucleotide specificity of the enzyme and binds the substrate succinate, while the binding sites for coenzyme A and phosphate are found in the alpha subunit. The chain is Succinate--CoA ligase [ADP-forming] subunit beta from Xylella fastidiosa (strain 9a5c).